The chain runs to 177 residues: Large ribosomal subunit protein uL6 (177 aa).

It belongs to the universal ribosomal protein uL6 family. In terms of assembly, part of the 50S ribosomal subunit.

In terms of biological role, this protein binds to the 23S rRNA, and is important in its secondary structure. It is located near the subunit interface in the base of the L7/L12 stalk, and near the tRNA binding site of the peptidyltransferase center. This Yersinia enterocolitica serotype O:8 / biotype 1B (strain NCTC 13174 / 8081) protein is Large ribosomal subunit protein uL6.